Here is a 176-residue protein sequence, read N- to C-terminus: Large ribosomal subunit protein uL6 (176 aa).

A compositionally biased stretch (basic and acidic residues) spans 153 to 170; that stretch reads PEPYKGKGIRYGDEEVRR. The interval 153–176 is disordered; the sequence is PEPYKGKGIRYGDEEVRRKEAKKK.

This sequence belongs to the universal ribosomal protein uL6 family. As to quaternary structure, part of the 50S ribosomal subunit.

This protein binds to the 23S rRNA, and is important in its secondary structure. It is located near the subunit interface in the base of the L7/L12 stalk, and near the tRNA binding site of the peptidyltransferase center. The sequence is that of Large ribosomal subunit protein uL6 from Chromohalobacter salexigens (strain ATCC BAA-138 / DSM 3043 / CIP 106854 / NCIMB 13768 / 1H11).